We begin with the raw amino-acid sequence, 548 residues long: Chaperone Ric-8A (548 aa).

Disordered stretches follow at residues 443–484 (DPGH…EGMT) and 517–548 (GKMT…SDTN).

The protein belongs to the synembryn family.

The protein resides in the cytoplasm. It localises to the cell cortex. Functionally, chaperone that specifically binds and folds nascent G alpha proteins prior to G protein heterotrimer formation, promoting their stability and activity: folds GNAI1, GNAO1, GNA13 and GNAQ. Does not fold G(s) G-alpha proteins GNAS nor GNAL. Also acts as a guanine nucleotide exchange factor (GEF) for G alpha proteins by stimulating exchange of bound GDP for free GTP. The polypeptide is Chaperone Ric-8A (ric8a) (Danio rerio (Zebrafish)).